The primary structure comprises 181 residues: CDP-diacylglycerol--glycerol-3-phosphate 3-phosphatidyltransferase (181 aa).

4 helical membrane passes run 8–28, 35–55, 64–84, and 148–168; these read PNYL…LFYI, KLGA…GYIA, FGKM…TIML, and IIYL…LTII.

The protein belongs to the CDP-alcohol phosphatidyltransferase class-I family.

The protein resides in the cell membrane. The enzyme catalyses a CDP-1,2-diacyl-sn-glycerol + sn-glycerol 3-phosphate = a 1,2-diacyl-sn-glycero-3-phospho-(1'-sn-glycero-3'-phosphate) + CMP + H(+). It participates in phospholipid metabolism; phosphatidylglycerol biosynthesis; phosphatidylglycerol from CDP-diacylglycerol: step 1/2. Its function is as follows. This protein catalyzes the committed step to the synthesis of the acidic phospholipids. In Rickettsia prowazekii (strain Madrid E), this protein is CDP-diacylglycerol--glycerol-3-phosphate 3-phosphatidyltransferase (pgsA).